Here is an 870-residue protein sequence, read N- to C-terminus: DNA-directed RNA polymerase subunit Rpo1N (870 aa).

Positions 60, 63, 70, 73, 100, 103, 146, and 149 each coordinate Zn(2+). Mg(2+) is bound by residues Asp451, Asp453, and Asp455.

The protein belongs to the RNA polymerase beta' chain family. In terms of assembly, part of the RNA polymerase complex. Mg(2+) is required as a cofactor. Zn(2+) serves as cofactor.

It localises to the cytoplasm. It catalyses the reaction RNA(n) + a ribonucleoside 5'-triphosphate = RNA(n+1) + diphosphate. DNA-dependent RNA polymerase (RNAP) catalyzes the transcription of DNA into RNA using the four ribonucleoside triphosphates as substrates. Forms the clamp head domain. The chain is DNA-directed RNA polymerase subunit Rpo1N from Methanothermobacter thermautotrophicus (strain ATCC 29096 / DSM 1053 / JCM 10044 / NBRC 100330 / Delta H) (Methanobacterium thermoautotrophicum).